Here is a 400-residue protein sequence, read N- to C-terminus: Dual-specificity RNA methyltransferase RlmN (400 aa).

Catalysis depends on glutamate 125, which acts as the Proton acceptor. One can recognise a Radical SAM core domain in the interval 131 to 372; it reads ETDRGTLCVS…VRTPRGRDIL (242 aa). A disulfide bridge connects residues cysteine 138 and cysteine 375. [4Fe-4S] cluster-binding residues include cysteine 145, cysteine 149, and cysteine 152. S-adenosyl-L-methionine is bound by residues 201–202, serine 233, 255–257, and asparagine 332; these read GE and SLH. Cysteine 375 (S-methylcysteine intermediate) is an active-site residue.

This sequence belongs to the radical SAM superfamily. RlmN family. [4Fe-4S] cluster is required as a cofactor.

The protein resides in the cytoplasm. It carries out the reaction adenosine(2503) in 23S rRNA + 2 reduced [2Fe-2S]-[ferredoxin] + 2 S-adenosyl-L-methionine = 2-methyladenosine(2503) in 23S rRNA + 5'-deoxyadenosine + L-methionine + 2 oxidized [2Fe-2S]-[ferredoxin] + S-adenosyl-L-homocysteine. The enzyme catalyses adenosine(37) in tRNA + 2 reduced [2Fe-2S]-[ferredoxin] + 2 S-adenosyl-L-methionine = 2-methyladenosine(37) in tRNA + 5'-deoxyadenosine + L-methionine + 2 oxidized [2Fe-2S]-[ferredoxin] + S-adenosyl-L-homocysteine. Functionally, specifically methylates position 2 of adenine 2503 in 23S rRNA and position 2 of adenine 37 in tRNAs. m2A2503 modification seems to play a crucial role in the proofreading step occurring at the peptidyl transferase center and thus would serve to optimize ribosomal fidelity. This Bradyrhizobium diazoefficiens (strain JCM 10833 / BCRC 13528 / IAM 13628 / NBRC 14792 / USDA 110) protein is Dual-specificity RNA methyltransferase RlmN.